A 44-amino-acid chain; its full sequence is Mu-conotoxin-like Cal 12.1.2h (44 aa).

4 disulfide bridges follow: C3-C16, C11-C28, C18-C33, and C27-C38. Residue W17 is modified to 6'-bromotryptophan. Residue P23 is modified to 4-hydroxyproline. 6'-bromotryptophan occurs at positions 36 and 37. P39 is subject to 4-hydroxyproline. 6'-bromotryptophan is present on W43.

In terms of tissue distribution, expressed by the venom duct.

The protein resides in the secreted. In terms of biological role, mu-conotoxins block voltage-gated sodium channels. This toxin reversibly blocks voltage-gated sodium channel in cephalopods, with no alteration in the voltage dependence of sodium conductance or on the kinetics of inactivation. This is Mu-conotoxin-like Cal 12.1.2h from Californiconus californicus (California cone).